A 176-amino-acid polypeptide reads, in one-letter code: Lipoprotein signal peptidase (176 aa).

4 consecutive transmembrane segments (helical) span residues 10-30, 48-68, 78-98, and 102-122; these read LFQFYPHNLIWLGLSVLAIVL, VPVLPFLNWTLLHNYGAAFSF, YFFTSLAGLVSILFVFWLLRM, and MVVLPVAIALILGGALGNLID. Residues D131 and D149 contribute to the active site. A helical transmembrane segment spans residues 141–161; it reads HFPAFNIADSAITLGTILLLI.

It belongs to the peptidase A8 family.

The protein localises to the cell inner membrane. It catalyses the reaction Release of signal peptides from bacterial membrane prolipoproteins. Hydrolyzes -Xaa-Yaa-Zaa-|-(S,diacylglyceryl)Cys-, in which Xaa is hydrophobic (preferably Leu), and Yaa (Ala or Ser) and Zaa (Gly or Ala) have small, neutral side chains.. It functions in the pathway protein modification; lipoprotein biosynthesis (signal peptide cleavage). Functionally, this protein specifically catalyzes the removal of signal peptides from prolipoproteins. This chain is Lipoprotein signal peptidase, found in Acinetobacter baumannii (strain ATCC 17978 / DSM 105126 / CIP 53.77 / LMG 1025 / NCDC KC755 / 5377).